The following is a 262-amino-acid chain: Acyl-[acyl-carrier-protein]--UDP-N-acetylglucosamine O-acyltransferase (262 aa).

It belongs to the transferase hexapeptide repeat family. LpxA subfamily. Homotrimer.

The protein localises to the cytoplasm. The catalysed reaction is a (3R)-hydroxyacyl-[ACP] + UDP-N-acetyl-alpha-D-glucosamine = a UDP-3-O-[(3R)-3-hydroxyacyl]-N-acetyl-alpha-D-glucosamine + holo-[ACP]. It functions in the pathway glycolipid biosynthesis; lipid IV(A) biosynthesis; lipid IV(A) from (3R)-3-hydroxytetradecanoyl-[acyl-carrier-protein] and UDP-N-acetyl-alpha-D-glucosamine: step 1/6. Functionally, involved in the biosynthesis of lipid A, a phosphorylated glycolipid that anchors the lipopolysaccharide to the outer membrane of the cell. This chain is Acyl-[acyl-carrier-protein]--UDP-N-acetylglucosamine O-acyltransferase, found in Photorhabdus laumondii subsp. laumondii (strain DSM 15139 / CIP 105565 / TT01) (Photorhabdus luminescens subsp. laumondii).